Consider the following 295-residue polypeptide: MELIQDTSRPPAKYVKGIPLIKYFAEALGPLESFEAWPDDLLISTYPKSGTTWVSEILDLIYQEGDLEKCQRAPVFLRVPFLEFSAPGVPTGVELLKDTPAPRLLKTHLPLALLPKTLLDQKVKVIYIARNAKDVAVSYYHFYRMAKVHPDPGTWDSFLEKFMAGEVCYGSWYQHVQEWWELSHTHPVLYLFYEDIKEDPKREIQKILEFIGRSLPEETVDHIVQRTSFKEMKKNPMTNYSTIPTAVMDHSISAFMRKGITGDWKSTFTVAQNELFEAHYAKKMAGCKLRFRWEL.

48–53 (KSGTTW) serves as a coordination point for 3'-phosphoadenylyl sulfate. 106–108 (KTH) contacts substrate. Residue histidine 108 is the Proton acceptor of the active site. 3'-phosphoadenylyl sulfate contacts are provided by residues arginine 130, serine 138, tyrosine 193, 227–232 (TSFKEM), and 255–259 (FMRKG). Serine 138 is subject to Phosphoserine.

The protein belongs to the sulfotransferase 1 family. Homodimer. In terms of tissue distribution, distal lung parenchyma.

It localises to the cytoplasm. It catalyses the reaction a phenol + 3'-phosphoadenylyl sulfate = an aryl sulfate + adenosine 3',5'-bisphosphate + H(+). The catalysed reaction is 17beta-estradiol + 3'-phosphoadenylyl sulfate = 17beta-estradiol 3-sulfate + adenosine 3',5'-bisphosphate + H(+). The enzyme catalyses 4-ethylphenol + 3'-phosphoadenylyl sulfate = 4-ethylphenyl sulfate + adenosine 3',5'-bisphosphate + H(+). It carries out the reaction 4-nitrophenol + 3'-phosphoadenylyl sulfate = 4-nitrophenyl sulfate + adenosine 3',5'-bisphosphate. It catalyses the reaction dopamine + 3'-phosphoadenylyl sulfate = dopamine 3-O-sulfate + adenosine 3',5'-bisphosphate + H(+). The catalysed reaction is dopamine + 3'-phosphoadenylyl sulfate = dopamine 4-O-sulfate + adenosine 3',5'-bisphosphate + H(+). The enzyme catalyses 3,3',5-triiodo-L-thyronine + 3'-phosphoadenylyl sulfate = 3,3',5-triiodo-L-thyronine sulfate + adenosine 3',5'-bisphosphate + H(+). It carries out the reaction 3,3',5'-triiodo-L-thyronine + 3'-phosphoadenylyl sulfate = 3,3',5'-triiodo-L-thyronine sulfate + adenosine 3',5'-bisphosphate + H(+). It catalyses the reaction 3,3'-diiodo-L-thyronine + 3'-phosphoadenylyl sulfate = 3,3'-diiodo-L-thyronine sulfate + adenosine 3',5'-bisphosphate + H(+). The catalysed reaction is L-thyroxine + 3'-phosphoadenylyl sulfate = L-thyroxine sulfate + adenosine 3',5'-bisphosphate + H(+). Sulfotransferase that utilizes 3'-phospho-5'-adenylyl sulfate (PAPS) as sulfonate donor to catalyze the sulfate conjugation of a wide variety of acceptor molecules bearing a hydroxyl or an amine group. Sulfonation increases the water solubility of most compounds, and therefore their renal excretion, but it can also result in bioactivation to form active metabolites. Displays broad substrate specificity for small phenolic compounds. Plays an important role in the sulfonation of endogenous molecules such as steroid hormones. Mediates also the metabolic activation of carcinogenic N-hydroxyarylamines leading to highly reactive intermediates capable of forming DNA adducts, potentially resulting in mutagenesis. May play a role in gut microbiota-host metabolic interaction. O-sulfonates 4-ethylphenol (4-EP), a dietary tyrosine-derived metabolite produced by gut bacteria. The product 4-EPS crosses the blood-brain barrier and may negatively regulate oligodendrocyte maturation and myelination, affecting the functional connectivity of different brain regions associated with the limbic system. Catalyzes the sulfate conjugation of dopamine. Catalyzes the sulfation of T4 (L-thyroxine/3,5,3',5'-tetraiodothyronine), T3 (3,5,3'-triiodothyronine), rT3 (3,3',5'-triiodothyronine) and 3,3'-T2 (3,3'-diiodothyronine), with a substrate preference of 3,3'-T2 &gt; rT3 &gt; T3 &gt; T4. The polypeptide is Sulfotransferase 1A1 (SULT1A1) (Bos taurus (Bovine)).